Reading from the N-terminus, the 217-residue chain is Imidazole glycerol phosphate synthase subunit HisH (217 aa).

The region spanning 5–217 is the Glutamine amidotransferase type-1 domain; sequence RVGIINYGVG…LRLLANFLTL (213 aa). The active-site Nucleophile is the Cys93. Residues His199 and Glu201 contribute to the active site.

In terms of assembly, heterodimer of HisH and HisF.

It is found in the cytoplasm. It catalyses the reaction 5-[(5-phospho-1-deoxy-D-ribulos-1-ylimino)methylamino]-1-(5-phospho-beta-D-ribosyl)imidazole-4-carboxamide + L-glutamine = D-erythro-1-(imidazol-4-yl)glycerol 3-phosphate + 5-amino-1-(5-phospho-beta-D-ribosyl)imidazole-4-carboxamide + L-glutamate + H(+). It carries out the reaction L-glutamine + H2O = L-glutamate + NH4(+). Its pathway is amino-acid biosynthesis; L-histidine biosynthesis; L-histidine from 5-phospho-alpha-D-ribose 1-diphosphate: step 5/9. In terms of biological role, IGPS catalyzes the conversion of PRFAR and glutamine to IGP, AICAR and glutamate. The HisH subunit catalyzes the hydrolysis of glutamine to glutamate and ammonia as part of the synthesis of IGP and AICAR. The resulting ammonia molecule is channeled to the active site of HisF. In Helicobacter hepaticus (strain ATCC 51449 / 3B1), this protein is Imidazole glycerol phosphate synthase subunit HisH.